We begin with the raw amino-acid sequence, 614 residues long: Vitamin B12 transporter BtuB (614 aa).

A signal peptide spans 1 to 20 (MIKKASLLTACSVTAFSAWA). The short motif at 26–33 (DTLVVTAN) is the TonB box element. The TBDR plug domain maps to 38–152 (PRSTVLAPTT…IGGVVNIITT (115 aa)). Residues Leu83, Ser85, Asn92, and 110–111 (GS) contribute to the cyanocob(III)alamin site. Positions 155-614 (EPGTEISAGW…EYTLSGSYTF (460 aa)) constitute a TBDR beta-barrel domain. 3 consecutive transmembrane segments (beta stranded) span residues 158-165 (TEISAGWG), 169-178 (YQNYDVSTQQ), and 184-195 (TRVTLLGDYAHT). 4 residues coordinate Ca(2+): Asp199, Gln211, Asp213, and Asp215. Transmembrane regions (beta stranded) follow at residues 217–227 (FLSKTLYGALE) and 232–248 (DAWS…NRTN). 2 residues coordinate Ca(2+): Tyr249 and Asp250. Ala251 lines the cyanocob(III)alamin pocket. Asp261 is a Ca(2+) binding site. The next 14 beta stranded transmembrane spans lie at 263-277 (RKLY…LRYN), 279-296 (ELIK…KDYN), 309-325 (TLDE…NNII), 328-337 (HGNVGAGVDW), 353-369 (YDQR…QQVG), 371-381 (FTFEGAARSDD), 385-400 (FGRH…WEFI), 403-417 (YRFI…KAPN), 434-443 (KSKQWEGAFE), 449-458 (VNWRISGYRN), 473-490 (YYNE…TANF), 494-509 (PLTH…ARNA), 517-529 (RRAK…QLDW), and 535-550 (DWGI…YDKD). Cyanocob(III)alamin is bound at residue Thr309. Arg517 contacts cyanocob(III)alamin. Tyr551 is a cyanocob(III)alamin binding site. Beta stranded transmembrane passes span 558–572 (TVKM…LAVA), 585–596 (IANLFDKDYETV), and 602–614 (AGRE…SYTF). Residues 597-614 (YGYQTAGREYTLSGSYTF) carry the TonB C-terminal box motif.

It belongs to the TonB-dependent receptor family. BtuB (TC 1.B.14.3.1) subfamily.

It is found in the cell outer membrane. Functionally, involved in the active translocation of vitamin B12 (cyanocobalamin) across the outer membrane to the periplasmic space. It derives its energy for transport by interacting with the trans-periplasmic membrane protein TonB. The sequence is that of Vitamin B12 transporter BtuB from Escherichia coli O157:H7.